The chain runs to 367 residues: ELAV-like protein 3 (367 aa).

RRM domains are found at residues threonine 39–proline 117, alanine 125–asparagine 205, and tryptophan 284–serine 362.

The protein belongs to the RRM elav family. In terms of assembly, interacts with MAP1B light chain LC1. Brain specific.

In terms of biological role, RNA-binding protein that binds to AU-rich element (ARE) sequences of target mRNAs, including VEGF mRNA. May also bind poly-A tracts via RRM 3. May be involved in neuronal differentiation and maintenance. Plays a role in the stabilization of GAP43 mRNA and in spatial learning. The polypeptide is ELAV-like protein 3 (ELAVL3) (Homo sapiens (Human)).